The primary structure comprises 957 residues: UvrABC system protein A (957 aa).

33–40 (GLSGSGKS) is a binding site for ATP. The C4-type zinc finger occupies 252 to 279 (CPQCGFSIPELEPRMFSFNSPFGACPTC). 2 consecutive ABC transporter domains span residues 309–587 (WEPI…AKSL) and 607–935 (PNGR…KYLR). Residue 639-646 (GVSGSGKS) participates in ATP binding. A C4-type zinc finger spans residues 738–764 (CEACRGDGIIKIEMHFLPDVYVPCEVC).

The protein belongs to the ABC transporter superfamily. UvrA family. In terms of assembly, forms a heterotetramer with UvrB during the search for lesions.

The protein resides in the cytoplasm. The UvrABC repair system catalyzes the recognition and processing of DNA lesions. UvrA is an ATPase and a DNA-binding protein. A damage recognition complex composed of 2 UvrA and 2 UvrB subunits scans DNA for abnormalities. When the presence of a lesion has been verified by UvrB, the UvrA molecules dissociate. This is UvrABC system protein A from Halalkalibacterium halodurans (strain ATCC BAA-125 / DSM 18197 / FERM 7344 / JCM 9153 / C-125) (Bacillus halodurans).